The chain runs to 288 residues: Glycine--tRNA ligase alpha subunit (288 aa).

This sequence belongs to the class-II aminoacyl-tRNA synthetase family. As to quaternary structure, tetramer of two alpha and two beta subunits.

Its subcellular location is the cytoplasm. It carries out the reaction tRNA(Gly) + glycine + ATP = glycyl-tRNA(Gly) + AMP + diphosphate. The protein is Glycine--tRNA ligase alpha subunit of Rickettsia massiliae (strain Mtu5).